Reading from the N-terminus, the 400-residue chain is MTGASTTTATMRQRWQAVMMNNYGTPPIALASGDGAVVTDVDGRTYIDLLGGIAVNVLGHRHPAVIEAVTRQMSTLGHTSNLYATEPGIALAEELVALLGADQRTRVFFCNSGAEANEAAFKLSRLTGRTKLVAAHDAFHGRTMGSLALTGQPAKQTPFAPLPGDVTHVGYGDVDALAAAVDDHTAAVFLEPIMGESGVVVPPAGYLAAARDITARRGALLVLDEVQTGMGRTGAFFAHQHDGITPDVVTLAKGLGGGLPIGACLAVGPAAELLTPGLHGSTFGGNPVCAAAALAVLRVLASDGLVRRAEVLGKSLRHGIEALGHPLIDHVRGRGLLLGIALTAPHAKDAEATARDAGYLVNAAAPDVIRLAPPLIIAEAQLDGFVAALPAILDRAVGAP.

Pyridoxal 5'-phosphate is bound by residues 113–114 (GA) and Phe-139. Residue Arg-142 coordinates N(2)-acetyl-L-ornithine. Position 224–227 (224–227 (DEVQ)) interacts with pyridoxal 5'-phosphate. Lys-253 is modified (N6-(pyridoxal phosphate)lysine). Residue Ser-281 participates in N(2)-acetyl-L-ornithine binding. Position 282 (Thr-282) interacts with pyridoxal 5'-phosphate.

Belongs to the class-III pyridoxal-phosphate-dependent aminotransferase family. ArgD subfamily. As to quaternary structure, homodimer. Pyridoxal 5'-phosphate serves as cofactor.

The protein resides in the cytoplasm. It catalyses the reaction N(2)-acetyl-L-ornithine + 2-oxoglutarate = N-acetyl-L-glutamate 5-semialdehyde + L-glutamate. The protein operates within amino-acid biosynthesis; L-arginine biosynthesis; N(2)-acetyl-L-ornithine from L-glutamate: step 4/4. This chain is Acetylornithine aminotransferase, found in Mycobacterium bovis (strain ATCC BAA-935 / AF2122/97).